Here is a 486-residue protein sequence, read N- to C-terminus: Hexosaminidase D (486 aa).

E149 serves as the catalytic Proton donor.

It belongs to the glycosyl hydrolase 20 family. As to quaternary structure, homodimer; disulfide-linked. In terms of tissue distribution, expressed in synovial fibroblasts and synovial membranes.

The protein resides in the cytoplasm. The protein localises to the nucleus. It localises to the extracellular vesicle. It catalyses the reaction Hydrolysis of terminal non-reducing N-acetyl-D-hexosamine residues in N-acetyl-beta-D-hexosaminides.. Its activity is regulated as follows. Inhibited by O-(2-acetamido-2-deoxy-D-glucopyranosylidene)amino N-phenylcarbamate (PUGNAc). Inhibited by galacto-NAG-thiazoline. Has hexosaminidase activity. Responsible for the cleavage of the monosaccharides N-acetylglucosamine (GlcNAc) and N-acetylgalactosamine (GalNAc) from cellular substrates. Has a preference for galactosaminide over glucosaminide substrates. The sequence is that of Hexosaminidase D from Homo sapiens (Human).